The chain runs to 327 residues: Phenylalanine--tRNA ligase alpha subunit (327 aa).

Glu252 serves as a coordination point for Mg(2+).

This sequence belongs to the class-II aminoacyl-tRNA synthetase family. Phe-tRNA synthetase alpha subunit type 1 subfamily. Tetramer of two alpha and two beta subunits. It depends on Mg(2+) as a cofactor.

Its subcellular location is the cytoplasm. It carries out the reaction tRNA(Phe) + L-phenylalanine + ATP = L-phenylalanyl-tRNA(Phe) + AMP + diphosphate + H(+). This is Phenylalanine--tRNA ligase alpha subunit from Shewanella sp. (strain MR-7).